The following is a 304-amino-acid chain: D-alanine--D-alanine ligase (304 aa).

Residues 103–299 (KLIWQALGLP…FADLCIEILK (197 aa)) form the ATP-grasp domain. 129-184 (EEKLGLPMFVKPAAEGSSVGVVKVKEKGRLKSVYEELKHLQGEIIAERFIGGGEYS) contacts ATP. Mg(2+) is bound by residues D253, E266, and N268.

It belongs to the D-alanine--D-alanine ligase family. The cofactor is Mg(2+). Requires Mn(2+) as cofactor.

The protein localises to the cytoplasm. It catalyses the reaction 2 D-alanine + ATP = D-alanyl-D-alanine + ADP + phosphate + H(+). It participates in cell wall biogenesis; peptidoglycan biosynthesis. Cell wall formation. This chain is D-alanine--D-alanine ligase, found in Neisseria gonorrhoeae (strain ATCC 700825 / FA 1090).